The chain runs to 371 residues: Glutamate 5-kinase 2 (371 aa).

K13 is a binding site for ATP. Substrate-binding residues include S53, D140, and N152. ATP-binding positions include 172–173 (SD) and 214–220 (TGGMRSK). In terms of domain architecture, PUA spans 280–356 (EGEMILSDDC…KELTNRALID (77 aa)).

This sequence belongs to the glutamate 5-kinase family.

It localises to the cytoplasm. The catalysed reaction is L-glutamate + ATP = L-glutamyl 5-phosphate + ADP. It participates in amino-acid biosynthesis; L-proline biosynthesis; L-glutamate 5-semialdehyde from L-glutamate: step 1/2. In terms of biological role, catalyzes the transfer of a phosphate group to glutamate to form L-glutamate 5-phosphate. In Bacillus subtilis (strain 168), this protein is Glutamate 5-kinase 2 (proJ).